The primary structure comprises 360 residues: Photosystem II protein D1 (360 aa).

3 consecutive transmembrane segments (helical) span residues 29–46 (YIGWFGCLMFPTLLSAIS), 118–133 (HFFIGVCAYIGREWEL), and 142–156 (WICVAFSAPVAAAAA). H118 is a binding site for chlorophyll a. Y126 serves as a coordination point for pheophytin a. Residues D170 and E189 each coordinate [CaMn4O5] cluster. A helical membrane pass occupies residues 197–218 (FHMLGVAGVFGGSLFSAMHGSL). H198 is a chlorophyll a binding site. Residues H215 and 264-265 (SF) each bind a quinone. H215 provides a ligand contact to Fe cation. H272 provides a ligand contact to Fe cation. A helical transmembrane segment spans residues 274–288 (FLGAWPVVGIWFTAM). Positions 332, 333, 342, and 344 each coordinate [CaMn4O5] cluster. A propeptide spanning residues 345-360 (AGESLPVALVAPAVAA) is cleaved from the precursor.

Belongs to the reaction center PufL/M/PsbA/D family. In terms of assembly, PSII is composed of 1 copy each of membrane proteins PsbA, PsbB, PsbC, PsbD, PsbE, PsbF, PsbH, PsbI, PsbJ, PsbK, PsbL, PsbM, PsbT, PsbX, PsbY, PsbZ, Psb30/Ycf12, at least 3 peripheral proteins of the oxygen-evolving complex and a large number of cofactors. It forms dimeric complexes. The D1/D2 heterodimer binds P680, chlorophylls that are the primary electron donor of PSII, and subsequent electron acceptors. It shares a non-heme iron and each subunit binds pheophytin, quinone, additional chlorophylls, carotenoids and lipids. D1 provides most of the ligands for the Mn4-Ca-O5 cluster of the oxygen-evolving complex (OEC). There is also a Cl(-1) ion associated with D1 and D2, which is required for oxygen evolution. The PSII complex binds additional chlorophylls, carotenoids and specific lipids. is required as a cofactor. In terms of processing, tyr-161 forms a radical intermediate that is referred to as redox-active TyrZ, YZ or Y-Z. C-terminally processed by CTPA; processing is essential to allow assembly of the oxygen-evolving complex and thus photosynthetic growth.

The protein resides in the plastid. It localises to the chloroplast thylakoid membrane. It catalyses the reaction 2 a plastoquinone + 4 hnu + 2 H2O = 2 a plastoquinol + O2. In terms of biological role, photosystem II (PSII) is a light-driven water:plastoquinone oxidoreductase that uses light energy to abstract electrons from H(2)O, generating O(2) and a proton gradient subsequently used for ATP formation. It consists of a core antenna complex that captures photons, and an electron transfer chain that converts photonic excitation into a charge separation. The D1/D2 (PsbA/PsbD) reaction center heterodimer binds P680, the primary electron donor of PSII as well as several subsequent electron acceptors. The sequence is that of Photosystem II protein D1 from Emiliania huxleyi (Coccolithophore).